The chain runs to 59 residues: Large ribosomal subunit protein bL32 (59 aa).

The segment at 1–59 is disordered; that stretch reads MAVQQNKKSPSKRGMHRAHDFLTAPVIAIEPSTGEAHRRHHISPNGFYRGRKVVKGKDE. Basic residues predominate over residues 49-59; that stretch reads RGRKVVKGKDE.

Belongs to the bacterial ribosomal protein bL32 family.

In Laribacter hongkongensis (strain HLHK9), this protein is Large ribosomal subunit protein bL32.